The primary structure comprises 121 residues: Large ribosomal subunit protein uL18 (121 aa).

Belongs to the universal ribosomal protein uL18 family. As to quaternary structure, part of the 50S ribosomal subunit; part of the 5S rRNA/L5/L18/L25 subcomplex. Contacts the 5S and 23S rRNAs.

This is one of the proteins that bind and probably mediate the attachment of the 5S RNA into the large ribosomal subunit, where it forms part of the central protuberance. This chain is Large ribosomal subunit protein uL18, found in Paraburkholderia xenovorans (strain LB400).